We begin with the raw amino-acid sequence, 160 residues long: S-ribosylhomocysteine lyase (160 aa).

Fe cation contacts are provided by His57, His61, and Cys127.

This sequence belongs to the LuxS family. In terms of assembly, homodimer. Requires Fe cation as cofactor.

The catalysed reaction is S-(5-deoxy-D-ribos-5-yl)-L-homocysteine = (S)-4,5-dihydroxypentane-2,3-dione + L-homocysteine. In terms of biological role, involved in the synthesis of autoinducer 2 (AI-2) which is secreted by bacteria and is used to communicate both the cell density and the metabolic potential of the environment. The regulation of gene expression in response to changes in cell density is called quorum sensing. Catalyzes the transformation of S-ribosylhomocysteine (RHC) to homocysteine (HC) and 4,5-dihydroxy-2,3-pentadione (DPD). This chain is S-ribosylhomocysteine lyase, found in Streptococcus suis (strain 98HAH33).